A 115-amino-acid chain; its full sequence is U3-lycotoxin-Ls1c (115 aa).

The N-terminal stretch at 1–20 (MKFVLLFGVLLVTLFSYSSA) is a signal peptide. Residues 21 to 44 (EMLDDFDQADEDELLSLIEKEEAR) constitute a propeptide that is removed on maturation. 4 disulfide bridges follow: cysteine 48–cysteine 63, cysteine 55–cysteine 72, cysteine 62–cysteine 87, and cysteine 74–cysteine 85.

It belongs to the neurotoxin 19 (CSTX) family. 01 subfamily. In terms of tissue distribution, expressed by the venom gland.

Its subcellular location is the secreted. The protein is U3-lycotoxin-Ls1c of Lycosa singoriensis (Wolf spider).